The chain runs to 489 residues: Retinoblastoma-binding protein 5 homolog (489 aa).

WD repeat units lie at residues 22–63 (DCIS…KIIS), 64–103 (AHVH…LEHK), 147–187 (DSDG…VVAS), 195–234 (SSAT…TLGK), 248–290 (VNKT…KILH), and 292–330 (TKGE…NWSA). The disordered stretch occupies residues 451–489 (DVSLPDAPTDETHPLISSKASKDKQQPVGGKKAAGRTKK).

In terms of assembly, core component of several methyltransferase-containing complexes. Component of the SET1 complex, composed at least of the catalytic subunit Set1, wds/WDR5, Wdr82, Rbbp5, ash2, Cfp1/CXXC1, hcf and Dpy-30L1. Component of the MLL3/4 complex composed at least of the catalytic subunit trr, ash2, Rbbp5, Dpy-30L1, wds, hcf, ptip, Pa1, Utx, Lpt and Ncoa6.

It is found in the nucleus. In terms of biological role, component of the SET1 complex that specifically di- and trimethylates 'Lys-4' of histone H3 and of the MLL3/4 complex which also methylates histone H3 'Lys-4'. The protein is Retinoblastoma-binding protein 5 homolog of Drosophila melanogaster (Fruit fly).